The primary structure comprises 100 residues: Urease subunit gamma (100 aa).

It belongs to the urease gamma subunit family. Heterotrimer of UreA (gamma), UreB (beta) and UreC (alpha) subunits. Three heterotrimers associate to form the active enzyme.

The protein resides in the cytoplasm. It carries out the reaction urea + 2 H2O + H(+) = hydrogencarbonate + 2 NH4(+). It functions in the pathway nitrogen metabolism; urea degradation; CO(2) and NH(3) from urea (urease route): step 1/1. This is Urease subunit gamma from Herpetosiphon aurantiacus (strain ATCC 23779 / DSM 785 / 114-95).